The following is a 380-amino-acid chain: MSKRDFYEVLGVAKNASDDDIKKAYRKLAMKYHPDRNQGDAAREAEEKFKEAKEAYEMLSDSNKRAAYDQYGHAGVDPNRGMGGGAEGFGGFAEAFGDIFGDMFNQGGGRRGGAGGGRQVYRGNDLSYAMEITLEEAAHGKDAQIRIPSWDGCDTCHGSGAKPGTSAKTCTTCNGMGSVQMRQGFFSVQQTCPHCRGTGKIIPEPCTSCGGQGKVKRQKTLEVKIPAGIDDGMRIRSSGNGEPGTNGGPAGDLYIEIRIKDHDIFERDGDDLHCNVPVSFITAALGGEIEVPTLSGKAAIDIPEGTQAGKQFRLRGKGIKGVRSSYPGDLYCHIVVETPVKLTEYQRKLLRELEESLKKGGAKHSPSGESWTDRLKSFFS.

Residues 5–72 (DFYEVLGVAK…NKRAAYDQYG (68 aa)) form the J domain. The CR-type zinc-finger motif lies at 140-218 (GKDAQIRIPS…CGGQGKVKRQ (79 aa)). Cys153, Cys156, Cys170, Cys173, Cys192, Cys195, Cys206, and Cys209 together coordinate Zn(2+). 4 CXXCXGXG motif repeats span residues 153–160 (CDTCHGSG), 170–177 (CTTCNGMG), 192–199 (CPHCRGTG), and 206–213 (CTSCGGQG). Positions 359–380 (KGGAKHSPSGESWTDRLKSFFS) are disordered. Over residues 371–380 (WTDRLKSFFS) the composition is skewed to basic and acidic residues.

Belongs to the DnaJ family. As to quaternary structure, homodimer. Zn(2+) serves as cofactor.

The protein localises to the cytoplasm. Its function is as follows. Participates actively in the response to hyperosmotic and heat shock by preventing the aggregation of stress-denatured proteins and by disaggregating proteins, also in an autonomous, DnaK-independent fashion. Unfolded proteins bind initially to DnaJ; upon interaction with the DnaJ-bound protein, DnaK hydrolyzes its bound ATP, resulting in the formation of a stable complex. GrpE releases ADP from DnaK; ATP binding to DnaK triggers the release of the substrate protein, thus completing the reaction cycle. Several rounds of ATP-dependent interactions between DnaJ, DnaK and GrpE are required for fully efficient folding. Also involved, together with DnaK and GrpE, in the DNA replication of plasmids through activation of initiation proteins. The chain is Chaperone protein DnaJ from Delftia acidovorans (strain DSM 14801 / SPH-1).